Consider the following 283-residue polypeptide: 4-diphosphocytidyl-2-C-methyl-D-erythritol kinase (283 aa).

The active site involves Lys-12. Residue 99–109 (PLAAGIGGGSA) coordinates ATP. Asp-141 is a catalytic residue.

The protein belongs to the GHMP kinase family. IspE subfamily.

It carries out the reaction 4-CDP-2-C-methyl-D-erythritol + ATP = 4-CDP-2-C-methyl-D-erythritol 2-phosphate + ADP + H(+). The protein operates within isoprenoid biosynthesis; isopentenyl diphosphate biosynthesis via DXP pathway; isopentenyl diphosphate from 1-deoxy-D-xylulose 5-phosphate: step 3/6. In terms of biological role, catalyzes the phosphorylation of the position 2 hydroxy group of 4-diphosphocytidyl-2C-methyl-D-erythritol. The sequence is that of 4-diphosphocytidyl-2-C-methyl-D-erythritol kinase from Sphingopyxis alaskensis (strain DSM 13593 / LMG 18877 / RB2256) (Sphingomonas alaskensis).